A 774-amino-acid polypeptide reads, in one-letter code: Fe(3+) dicitrate transport protein FecA (774 aa).

The signal sequence occupies residues 1–33 (MTPLRVFRKTTPLVNTIRLSLLPLAGLSFSAFA). Positions 56–63 (FTLSVDAS) match the TonB box motif. In terms of domain architecture, TBDR plug spans 129–250 (DVFEHAGARD…VGGVVNFVTR (122 aa)). The 520-residue stretch at 255 to 774 (DFGIEAGVEG…TLYMQGSLKF (520 aa)) folds into the TBDR beta-barrel domain. A TonB C-terminal box motif is present at residues 757-774 (GIYAGQPRTLYMQGSLKF).

This sequence belongs to the TonB-dependent receptor family. In terms of assembly, interacts (via periplasmic N-terminus) with FecR (via periplasmic C-terminus).

It localises to the cell outer membrane. Functionally, fecA is the outer membrane receptor protein in the Fe(3+) dicitrate transport system. The polypeptide is Fe(3+) dicitrate transport protein FecA (fecA) (Escherichia coli (strain K12)).